A 120-amino-acid polypeptide reads, in one-letter code: NAD(P)H-quinone oxidoreductase subunit 3, chloroplastic (120 aa).

The next 3 helical transmembrane spans lie at 9-29, 64-84, and 88-108; these read IFWT…WISG, MFAL…PWAM, and VLGV…VVGL.

This sequence belongs to the complex I subunit 3 family. NDH is composed of at least 16 different subunits, 5 of which are encoded in the nucleus.

It is found in the plastid. The protein localises to the chloroplast thylakoid membrane. The enzyme catalyses a plastoquinone + NADH + (n+1) H(+)(in) = a plastoquinol + NAD(+) + n H(+)(out). The catalysed reaction is a plastoquinone + NADPH + (n+1) H(+)(in) = a plastoquinol + NADP(+) + n H(+)(out). Functionally, NDH shuttles electrons from NAD(P)H:plastoquinone, via FMN and iron-sulfur (Fe-S) centers, to quinones in the photosynthetic chain and possibly in a chloroplast respiratory chain. The immediate electron acceptor for the enzyme in this species is believed to be plastoquinone. Couples the redox reaction to proton translocation, and thus conserves the redox energy in a proton gradient. The protein is NAD(P)H-quinone oxidoreductase subunit 3, chloroplastic of Zea mays (Maize).